A 337-amino-acid polypeptide reads, in one-letter code: uncharacterized protein (337 aa).

A compositionally biased stretch (acidic residues) spans 1–11 (MSEIEEEEEEG). Residues 1–20 (MSEIEEEEEEGSASAITGSR) form a disordered region. Serine 2 carries the post-translational modification N-acetylserine. A coiled-coil region spans residues 50 to 130 (ALSTRVSALE…LQRDVSKLEG (81 aa)). The segment at 139 to 242 (LQDDDQNAGT…PISPRRHSVS (104 aa)) is disordered. A compositionally biased stretch (low complexity) spans 170 to 182 (SSIQSQQASEAIE). Over residues 197–211 (LSASLPLVSQTTTPR) the composition is skewed to polar residues. A Phosphothreonine modification is found at threonine 213. At serine 217 the chain carries Phosphoserine. Positions 223–233 (ASGTPKTTSRP) are enriched in polar residues. Threonine 226 is subject to Phosphothreonine. The residue at position 235 (serine 235) is a Phosphoserine.

This is an uncharacterized protein from Arabidopsis thaliana (Mouse-ear cress).